We begin with the raw amino-acid sequence, 249 residues long: Diphthine synthase (249 aa).

S-adenosyl-L-methionine is bound by residues aspartate 83, leucine 86, 111–112 (SI), leucine 163, and leucine 205.

Belongs to the diphthine synthase family. As to quaternary structure, homodimer.

The enzyme catalyses 2-[(3S)-amino-3-carboxypropyl]-L-histidyl-[translation elongation factor 2] + 3 S-adenosyl-L-methionine = diphthine-[translation elongation factor 2] + 3 S-adenosyl-L-homocysteine + 3 H(+). The protein operates within protein modification; peptidyl-diphthamide biosynthesis. Its function is as follows. S-adenosyl-L-methionine-dependent methyltransferase that catalyzes the trimethylation of the amino group of the modified target histidine residue in translation elongation factor 2 (EF-2), to form an intermediate called diphthine. The three successive methylation reactions represent the second step of diphthamide biosynthesis. The sequence is that of Diphthine synthase from Pyrobaculum islandicum (strain DSM 4184 / JCM 9189 / GEO3).